The primary structure comprises 312 residues: Malate dehydrogenase (312 aa).

Residues 7–13 and Asp34 contribute to the NAD(+) site; that span reads GAAGGIG. 2 residues coordinate substrate: Arg81 and Arg87. Residues Asn94 and 117-119 each bind NAD(+); that span reads ITN. Asn119 and Arg153 together coordinate substrate. Residue His177 is the Proton acceptor of the active site. Met227 lines the NAD(+) pocket.

The protein belongs to the LDH/MDH superfamily. MDH type 1 family. As to quaternary structure, homodimer.

It catalyses the reaction (S)-malate + NAD(+) = oxaloacetate + NADH + H(+). Functionally, catalyzes the reversible oxidation of malate to oxaloacetate. This chain is Malate dehydrogenase, found in Salmonella choleraesuis (strain SC-B67).